Here is a 295-residue protein sequence, read N- to C-terminus: Tyrosine recombinase XerD (295 aa).

One can recognise a Core-binding (CB) domain in the interval 1 to 85 (MNTIIEEYLN…TIRSFHQFAL (85 aa)). Residues 106–289 (KLPDVLEIDE…SKSQIRKMYT (184 aa)) enclose the Tyr recombinase domain. Residues Arg146, Lys170, His241, Arg244, and His267 contribute to the active site. Residue Tyr276 is the O-(3'-phospho-DNA)-tyrosine intermediate of the active site.

It belongs to the 'phage' integrase family. XerD subfamily. In terms of assembly, forms a cyclic heterotetrameric complex composed of two molecules of XerC and two molecules of XerD.

It localises to the cytoplasm. Functionally, site-specific tyrosine recombinase, which acts by catalyzing the cutting and rejoining of the recombining DNA molecules. The XerC-XerD complex is essential to convert dimers of the bacterial chromosome into monomers to permit their segregation at cell division. It also contributes to the segregational stability of plasmids. The polypeptide is Tyrosine recombinase XerD (Staphylococcus epidermidis (strain ATCC 35984 / DSM 28319 / BCRC 17069 / CCUG 31568 / BM 3577 / RP62A)).